Consider the following 735-residue polypeptide: Dolichyl-diphosphooligosaccharide--protein glycosyltransferase subunit STT3B (735 aa).

The Cytoplasmic segment spans residues 1 to 38 (MGGKSEPAKSESMATKPDLLNTSFFSFKSLKLKTKQQE). A helical membrane pass occupies residues 39 to 59 (LLLRISILGLVYILAFIARLF). The Lumenal segment spans residues 60–142 (SVLRYESMIH…VHIREVCVLT (83 aa)). Positions 70–72 (EFD) match the DXD motif 1 motif. Aspartate 72 is a binding site for Mn(2+). Residues 143–161 (APFFASNTTLVAYFFGKEL) form a helical membrane-spanning segment. Residues 162-163 (WD) are Cytoplasmic-facing. Residues 164–181 (TGAGLVAAVLIAICPGYI) traverse the membrane as a helical segment. The Lumenal segment spans residues 182-192 (SRSVAGSYDNE). Mn(2+) contacts are provided by aspartate 190 and glutamate 192. The short motif at 190–192 (DNE) is the DXD motif 2 element. The helical transmembrane segment at 193-212 (AVAIFALLLTFYLFVKAVNT) threads the bilayer. The Cytoplasmic portion of the chain corresponds to 213–214 (GS). A helical transmembrane segment spans residues 215 to 229 (LAWALASAFGYFYMV). The Lumenal portion of the chain corresponds to 230 to 234 (SAWGG). The helical transmembrane segment at 235–251 (YVFIINLVPLYVLVLLI) threads the bilayer. Residues 252–256 (TGRYS) are Cytoplasmic-facing. The helical transmembrane segment at 257–282 (MRLYIAYNCMYILGMLLAMQIRFVGF) threads the bilayer. At 283 to 290 (QHVQSGEH) the chain is on the lumenal side. Residues 291 to 310 (MGAMGVFLLMQVFYFLDWVK) traverse the membrane as a helical segment. At 311–326 (YQLNDTKLFQTFLRIT) the chain is on the cytoplasmic side. The helical transmembrane segment at 327-347 (VTSAILVGGVAVGVGTASGYI) threads the bilayer. The Lumenal portion of the chain corresponds to 348–380 (SPWTGRFYSLLDPTYAKDHIPIIASVSEHQPTA). The SVSE motif motif lies at 372–375 (SVSE). A helical membrane pass occupies residues 381–403 (WSSFMFDYHILLFLFPAGLYFCF). At 404–409 (KRLTDA) the chain is on the cytoplasmic side. Residues 410–426 (TIFIVMYGLTSLYFAGV) form a helical membrane-spanning segment. Topologically, residues 427–430 (MVRL) are lumenal. Arginine 429 is a binding site for dolichyl diphosphooligosaccharide. The chain crosses the membrane as a helical span at residues 431 to 452 (ILVATPAVCLISAIAVSATIKN). The Cytoplasmic portion of the chain corresponds to 453–494 (LTSLLRTKQKVSQTGSTKGAGSSKASSKVTLDQSQPFQKNGA). The helical transmembrane segment at 495–515 (IALLVGVFYLLSRYAIHCTWV) threads the bilayer. Residues 516 to 735 (TAEAYSSPSI…YRVKPPTNRL (220 aa)) lie on the Lumenal side of the membrane. Positions 562–564 (WWD) are interacts with target acceptor peptide in protein substrate. A WWDYG motif motif is present at residues 562 to 566 (WWDYG). Tyrosine 567 lines the dolichyl diphosphooligosaccharide pocket. N-linked (GlcNAc...) asparagine glycosylation is found at asparagine 574 and asparagine 581. Asparagine 585 is a glycosylation site (N-linked (GlcNAc...) (high mannose) asparagine). A DK motif motif is present at residues 629-636 (DINKFLWM).

It belongs to the STT3 family. Component of the oligosaccharyltransferase (OST) complex. Requires Mg(2+) as cofactor. Mn(2+) serves as cofactor. As to expression, expressed preferentially in the root but also in the shoot.

The protein resides in the endoplasmic reticulum membrane. The catalysed reaction is a di-trans,poly-cis-dolichyl diphosphooligosaccharide + L-asparaginyl-[protein] = N(4)-(oligosaccharide-(1-&gt;4)-N-acetyl-beta-D-glucosaminyl-(1-&gt;4)-N-acetyl-beta-D-glucosaminyl)-L-asparaginyl-[protein] + a di-trans,poly-cis-dolichyl diphosphate + H(+). It participates in protein modification; protein glycosylation. Functionally, catalytic subunit of the oligosaccharyl transferase (OST) complex that catalyzes the initial transfer of a defined glycan (Glc(3)Man(9)GlcNAc(2) in eukaryotes) from the lipid carrier dolichol-pyrophosphate to an asparagine residue within an Asn-X-Ser/Thr consensus motif in nascent polypeptide chains, the first step in protein N-glycosylation. N-glycosylation occurs cotranslationally and the complex associates with the Sec61 complex at the channel-forming translocon complex that mediates protein translocation across the endoplasmic reticulum (ER). All subunits are required for a maximal enzyme activity. This subunit contains the active site and the acceptor peptide and donor lipid-linked oligosaccharide (LLO) binding pockets. This chain is Dolichyl-diphosphooligosaccharide--protein glycosyltransferase subunit STT3B (STT3B), found in Arabidopsis thaliana (Mouse-ear cress).